The chain runs to 68 residues: 1-carboxybiuret hydrolase subunit AtzG (68 aa).

As to quaternary structure, heterotetramer consisting of 2 AtzE and 2 AtzG subunits.

The protein operates within xenobiotic degradation; atrazine degradation. Functionally, important for the activity of the AtzE subunit of 1-carboxybiuret hydrolase. In Pseudomonas sp. (strain ADP), this protein is 1-carboxybiuret hydrolase subunit AtzG.